Consider the following 314-residue polypeptide: 4-diphosphocytidyl-2-C-methyl-D-erythritol kinase (314 aa).

The active site involves K11. Residue 95 to 105 participates in ATP binding; that stretch reads PIGAGLAGGST. Residue D137 is part of the active site.

This sequence belongs to the GHMP kinase family. IspE subfamily.

The catalysed reaction is 4-CDP-2-C-methyl-D-erythritol + ATP = 4-CDP-2-C-methyl-D-erythritol 2-phosphate + ADP + H(+). The protein operates within isoprenoid biosynthesis; isopentenyl diphosphate biosynthesis via DXP pathway; isopentenyl diphosphate from 1-deoxy-D-xylulose 5-phosphate: step 3/6. In terms of biological role, catalyzes the phosphorylation of the position 2 hydroxy group of 4-diphosphocytidyl-2C-methyl-D-erythritol. This is 4-diphosphocytidyl-2-C-methyl-D-erythritol kinase from Synechococcus elongatus (strain ATCC 33912 / PCC 7942 / FACHB-805) (Anacystis nidulans R2).